Reading from the N-terminus, the 133-residue chain is Bacteriohemerythrin (133 aa).

H19, H56, E60, H75, H79, H115, and D120 together coordinate Fe cation.

The protein belongs to the hemerythrin family. As to quaternary structure, monomer.

Its function is as follows. Oxygen-binding protein. May be involved in a storage mechanism or for delivery to oxygen-requiring enzymes. The oxygen-binding site contains two iron atoms. The protein is Bacteriohemerythrin of Campylobacter jejuni subsp. jejuni serotype O:23/36 (strain 81-176).